Reading from the N-terminus, the 198-residue chain is Autophagy-related protein 33 (198 aa).

3 helical membrane passes run 17–37, 60–80, and 86–106; these read VSLG…LPAL, PVLA…FLAP, and PYLL…ILIP. The segment at 111–147 is disordered; it reads APRRTASSAPRKSSRAKMEASYEVLGDAHSEPASDED. The segment covering 112-121 has biased composition (low complexity); the sequence is PRRTASSAPR. Residues 126-142 show a composition bias toward basic and acidic residues; it reads AKMEASYEVLGDAHSEP. The chain crosses the membrane as a helical span at residues 171–191; sequence TAISALGFAMAVVGIWGDGAP.

It belongs to the ATG33 family.

Its subcellular location is the mitochondrion membrane. In terms of biological role, involved in the selective degradation of mitochondria via autophagy during starvation and at post-log phase. Autophagy is required for proper vegetative growth, asexual/sexual reproduction, and full virulence. Autophagy is particularly involved in the biosynthesis of deoxynivalenol (DON), an important virulence determinant. The polypeptide is Autophagy-related protein 33 (Gibberella zeae (strain ATCC MYA-4620 / CBS 123657 / FGSC 9075 / NRRL 31084 / PH-1) (Wheat head blight fungus)).